The primary structure comprises 165 residues: MLNKSLLIRFVLTILIIVQVIIFDTQPVQAAVDSYVKRYLDAEIPVGIKLNKQGELKNFSAEDLSEGKQTFAKNCLNCHVGGANLVNPSVSLSLEKLKGATPPRDDLNNLVAFLRDPMIYDGSSYTLFCRQITENWMSQQEVENIAAFILRAAQKAPYWGVENVR.

Residues 1 to 30 (MLNKSLLIRFVLTILIIVQVIIFDTQPVQA) form the signal peptide. Heme c contacts are provided by cysteine 75, cysteine 78, histidine 79, and cysteine 129.

This sequence belongs to the cytochrome c family. PsbV subfamily. The cofactor is heme c.

Its subcellular location is the cellular thylakoid membrane. Its function is as follows. Possible low-potential cytochrome c. In Trichodesmium erythraeum (strain IMS101), this protein is Cytochrome c-550-like protein (psbV2).